A 155-amino-acid chain; its full sequence is Ribosomal RNA large subunit methyltransferase H (155 aa).

Residues Leu72, Gly103, and 122 to 127 (LSALTL) each bind S-adenosyl-L-methionine.

This sequence belongs to the RNA methyltransferase RlmH family. Homodimer.

Its subcellular location is the cytoplasm. The catalysed reaction is pseudouridine(1915) in 23S rRNA + S-adenosyl-L-methionine = N(3)-methylpseudouridine(1915) in 23S rRNA + S-adenosyl-L-homocysteine + H(+). Functionally, specifically methylates the pseudouridine at position 1915 (m3Psi1915) in 23S rRNA. In Citrobacter koseri (strain ATCC BAA-895 / CDC 4225-83 / SGSC4696), this protein is Ribosomal RNA large subunit methyltransferase H.